Reading from the N-terminus, the 178-residue chain is RNA-binding protein (178 aa).

Positions 108-178 are disordered; it reads SGFQKPKIGS…KGKGRRGGKR (71 aa). A compositionally biased stretch (basic residues) spans 168-178; the sequence is SKGKGRRGGKR.

The protein belongs to the phytoreovirus RNA-binding protein family.

The protein localises to the host cytoplasm. Constituent of viral factories. Binds to ssRNA and dsRNA. The polypeptide is RNA-binding protein (Wound tumor virus (strain NJ) (WTV)).